The primary structure comprises 339 residues: Anthranilate phosphoribosyltransferase (339 aa).

Residues Gly81, 84–85 (GD), 91–94 (NIST), 109–117 (KHGNRAASS), and Ser121 each bind 5-phospho-alpha-D-ribose 1-diphosphate. Gly81 contributes to the anthranilate binding site. Ser93 lines the Mg(2+) pocket. Residue Asn112 participates in anthranilate binding. An anthranilate-binding site is contributed by Arg167. Mg(2+) is bound by residues Asp226 and Glu227.

It belongs to the anthranilate phosphoribosyltransferase family. In terms of assembly, homodimer. Requires Mg(2+) as cofactor.

The enzyme catalyses N-(5-phospho-beta-D-ribosyl)anthranilate + diphosphate = 5-phospho-alpha-D-ribose 1-diphosphate + anthranilate. It functions in the pathway amino-acid biosynthesis; L-tryptophan biosynthesis; L-tryptophan from chorismate: step 2/5. Catalyzes the transfer of the phosphoribosyl group of 5-phosphorylribose-1-pyrophosphate (PRPP) to anthranilate to yield N-(5'-phosphoribosyl)-anthranilate (PRA). In Maricaulis maris (strain MCS10) (Caulobacter maris), this protein is Anthranilate phosphoribosyltransferase.